Here is a 237-residue protein sequence, read N- to C-terminus: ADTIVAVELDSYPNTDIGDPSYPHIGIDIKSVRSKSTARWNMQTGKVGTAHISYNSVAKRLSAVVSYTGSSSTTVSYDVDLNNVLPEWVRVGLSATTGLYKETNTILSWSFTSKLKTNSIADANSLHFSFNQFSQNPKDLILQGDATTDSDGNLQLTRVSSDGSPQGSSVGRALFYAPVHIWEKSAVVASFDATFTFLIKSPDRDPADGITFFIANTDTSIPSGSGGRLLGLFPDAN.

Positions 8 and 10 each coordinate Mn(2+). Ca(2+) contacts are provided by Asp-10, Tyr-12, Asn-14, and Asp-19. Residue Tyr-12 participates in a carbohydrate binding. Residues Asp-19 and His-24 each contribute to the Mn(2+) site. 99 to 100 provides a ligand contact to a carbohydrate; it reads LY. Asp-208 contributes to the Ca(2+) binding site. Arg-228 is an a carbohydrate binding site.

The protein belongs to the leguminous lectin family. As to quaternary structure, equilibrium between homodimer and homotetramer. Oligomerization is pH-dependent with homotetramers forming at pH 6.5 and above. Post-translationally, the beta and gamma chains are produced by partial proteolytic processing of the lectin alpha chain by an asparaginyl endopeptidase. Mixture of 60% alpha lectin and 40% of its beta and gamma proteolytic fragments. In terms of tissue distribution, seed.

It is found in the vacuole. The protein localises to the aleurone grain. Functionally, D-mannose/D-glucose-binding lectin. Has anti-inflammatory activity in rats. Induces histamine release in mast cells from hamster and rat. Induces lymphocyte proliferation and IFNG production. Shows toxicity against the aquatic snail B.glabrata at concentrations higher than 20 ug/ml. This chain is Lectin alpha chain, found in Dioclea virgata.